The primary structure comprises 382 residues: Mannitol-1-phosphate 5-dehydrogenase (382 aa).

4-15 (AVHFGAGNIGRG) serves as a coordination point for NAD(+).

It belongs to the mannitol dehydrogenase family. In terms of assembly, monomer.

It carries out the reaction D-mannitol 1-phosphate + NAD(+) = beta-D-fructose 6-phosphate + NADH + H(+). The polypeptide is Mannitol-1-phosphate 5-dehydrogenase (mtlD) (Streptococcus mutans serotype c (strain ATCC 700610 / UA159)).